The primary structure comprises 215 residues: Adenylate kinase (215 aa).

Residue 10-15 (GAGKGT) coordinates ATP. The NMP stretch occupies residues 30-59 (STGDMLRAAVKAGTELGLKAKSVMDAGNLV). Residues Thr-31, Arg-36, 57–59 (NLV), 85–88 (GFPR), and Gln-92 each bind AMP. The segment at 122 to 159 (GRRVHEGSGRIYHTIFNPPKVEGVDDVTGESLVQRKDD) is LID. Residues Arg-123 and 132-133 (IY) contribute to the ATP site. Residues Arg-156 and Arg-167 each coordinate AMP. Residue Gly-201 participates in ATP binding.

Belongs to the adenylate kinase family. As to quaternary structure, monomer.

The protein localises to the cytoplasm. The catalysed reaction is AMP + ATP = 2 ADP. Its pathway is purine metabolism; AMP biosynthesis via salvage pathway; AMP from ADP: step 1/1. Catalyzes the reversible transfer of the terminal phosphate group between ATP and AMP. Plays an important role in cellular energy homeostasis and in adenine nucleotide metabolism. The polypeptide is Adenylate kinase (Pseudomonas syringae pv. tomato (strain ATCC BAA-871 / DC3000)).